The chain runs to 255 residues: Tachylectin-2 (255 aa).

Positions 1–19 are cleaved as a signal peptide; sequence MKFLLVVLGFIGFLKDGIT. WD repeat units follow at residues 20 to 67, 68 to 114, 115 to 161, 162 to 208, and 209 to 255; these read VGGE…FLFL, SPGG…FLFF, DPNG…FLFF, HPNG…FLFF, and SSVG…FLFF.

Monomer.

It is found in the secreted. It localises to the cytoplasmic granule. Its function is as follows. Lectin that binds specifically to N-acetylglucosamine and N-acetylgalactosamine. Is part of the innate immunity host defense system of the horseshoe crab. The chain is Tachylectin-2 from Tachypleus tridentatus (Japanese horseshoe crab).